The primary structure comprises 218 residues: Large ribosomal subunit protein bL25 (218 aa).

The protein belongs to the bacterial ribosomal protein bL25 family. CTC subfamily. In terms of assembly, part of the 50S ribosomal subunit; part of the 5S rRNA/L5/L18/L25 subcomplex. Contacts the 5S rRNA. Binds to the 5S rRNA independently of L5 and L18.

Its function is as follows. This is one of the proteins that binds to the 5S RNA in the ribosome where it forms part of the central protuberance. This chain is Large ribosomal subunit protein bL25, found in Polaromonas naphthalenivorans (strain CJ2).